The primary structure comprises 767 residues: U3 small nucleolar RNA-associated protein 14 homolog A (767 aa).

Residues 23–49 form a disordered region; sequence TSNYPLSASEDEGDSDGERKHQKLLEA. Phosphoserine occurs at positions 29, 31, 37, 52, 77, and 81. K122 is covalently cross-linked (Glycyl lysine isopeptide (Lys-Gly) (interchain with G-Cter in SUMO2)). T205 is modified (phosphothreonine). A coiled-coil region spans residues 317–346; that stretch reads LEARQAMQEQLAKNKELTQKLQVVSESEEE. The disordered stretch occupies residues 338 to 554; that stretch reads QVVSESEEEG…SKGKNKKEQM (217 aa). Residues 342-355 are compositionally biased toward acidic residues; sequence ESEEEGGADEEEAL. Positions 398–433 are enriched in basic and acidic residues; the sequence is AAHEFPENEENDKPVAEEDELLKELEKRRSLRKRSE. A Citrulline modification is found at R431. A Glycyl lysine isopeptide (Lys-Gly) (interchain with G-Cter in SUMO2) cross-link involves residue K447. S451 carries the post-translational modification Phosphoserine. Residues 486-498 are compositionally biased toward acidic residues; it reads VWEEEPAPEEDEP. Residues 503–538 are compositionally biased toward basic and acidic residues; that stretch reads RPERMRTLEELEELGKEDSLPNKERPRPSVEGEQVR. Residue K518 forms a Glycyl lysine isopeptide (Lys-Gly) (interchain with G-Cter in SUMO2) linkage. R586 carries the post-translational modification Citrulline. The interval 730-767 is disordered; that stretch reads TAEDVDCRSSPRSDVPVMQSNPKQHSKHQKQRKKSSIG. The segment covering 753 to 767 has biased composition (basic residues); it reads QHSKHQKQRKKSSIG.

Belongs to the UTP14 family. Interacts with DHX37. Post-translationally, citrullinated by PADI4. In terms of tissue distribution, ubiquitously expressed.

It localises to the nucleus. It is found in the nucleolus. In terms of biological role, may be required for ribosome biogenesis. The chain is U3 small nucleolar RNA-associated protein 14 homolog A (Utp14a) from Mus musculus (Mouse).